The chain runs to 118 residues: Large ribosomal subunit protein uL18 (118 aa).

The segment at 1–25 is disordered; the sequence is MITKPDKNKVRQKRHRRVRGKLSGT. A compositionally biased stretch (basic residues) spans 10 to 20; that stretch reads VRQKRHRRVRG.

This sequence belongs to the universal ribosomal protein uL18 family. As to quaternary structure, part of the 50S ribosomal subunit; part of the 5S rRNA/L5/L18/L25 subcomplex. Contacts the 5S and 23S rRNAs.

In terms of biological role, this is one of the proteins that bind and probably mediate the attachment of the 5S RNA into the large ribosomal subunit, where it forms part of the central protuberance. This is Large ribosomal subunit protein uL18 from Streptococcus gordonii (strain Challis / ATCC 35105 / BCRC 15272 / CH1 / DL1 / V288).